The primary structure comprises 170 residues: CCHC-type zinc finger nucleic acid binding protein (170 aa).

Serine 2 is subject to N-acetylserine. The segment at 4-21 (NECFKCGRSGHWARECPT) adopts a CCHC-type 1 zinc-finger fold. The residue at position 8 (lysine 8) is an N6-acetyllysine. Omega-N-methylarginine; by PRMT1 is present on residues arginine 25 and arginine 27. An RNA-binding Arg/Gly-rich region (RGG-box) region spans residues 25-33 (RGRGMRSRG). Phosphoserine is present on serine 42. CCHC-type zinc fingers lie at residues 45-62 (DICYRCGESGHLAKDCDL), 65-82 (DACYNCGRGGHIAKDCKE), 89-106 (QCCYNCGKPGHLARDCDH), 110-127 (QKCYSCGEFGHIQKDCTK), 128-145 (VKCYRCGETGHVAINCSK), and 149-166 (VNCYRCGESGHLARECTI). Arginine 72 carries the omega-N-methylarginine modification.

In terms of assembly, associates with the 40S ribosomal subunit, the 80S ribosome and with polysomes. Post-translationally, arginine methylation by PRMT1 in the Arg/Gly-rich region impedes RNA binding.

Its subcellular location is the nucleus. It localises to the cytoplasm. The protein resides in the endoplasmic reticulum. Single-stranded DNA-binding protein that preferentially binds to the sterol regulatory element (SRE) sequence 5'-GTGCGGTG-3', and thereby mediates transcriptional repression. Has a role as transactivator of the Myc promoter. Binds single-stranded RNA in a sequence-specific manner. Binds G-rich elements in target mRNA coding sequences. Prevents G-quadruplex structure formation in vitro, suggesting a role in supporting translation by resolving stable structures on mRNAs. This chain is CCHC-type zinc finger nucleic acid binding protein (CNBP), found in Bos taurus (Bovine).